The chain runs to 210 residues: Somatotropin (210 aa).

Residues 1–22 (MGQVFLLMPVLLVSCFLSQGAA) form the signal peptide. His-38 contacts Zn(2+). The cysteines at positions 71 and 183 are disulfide-linked. Glu-192 is a binding site for Zn(2+). A disulfide bridge links Cys-200 with Cys-208.

Belongs to the somatotropin/prolactin family.

The protein resides in the secreted. Functionally, growth hormone plays an important role in growth control and is involved in the regulation of several anabolic processes. Implicated as an osmoregulatory substance important for seawater adaptation. The sequence is that of Somatotropin (gh) from Salmo salar (Atlantic salmon).